Consider the following 336-residue polypeptide: Glycerol-3-phosphate dehydrogenase [NAD(P)+] (336 aa).

4 residues coordinate NADPH: serine 16, tyrosine 17, histidine 37, and lysine 111. Sn-glycerol 3-phosphate contacts are provided by lysine 111, glycine 140, and threonine 142. Alanine 144 contacts NADPH. Lysine 196, aspartate 249, serine 259, arginine 260, and asparagine 261 together coordinate sn-glycerol 3-phosphate. Lysine 196 acts as the Proton acceptor in catalysis. Arginine 260 is a binding site for NADPH. NADPH contacts are provided by valine 284 and glutamate 286.

This sequence belongs to the NAD-dependent glycerol-3-phosphate dehydrogenase family.

The protein resides in the cytoplasm. The enzyme catalyses sn-glycerol 3-phosphate + NAD(+) = dihydroxyacetone phosphate + NADH + H(+). It carries out the reaction sn-glycerol 3-phosphate + NADP(+) = dihydroxyacetone phosphate + NADPH + H(+). It functions in the pathway membrane lipid metabolism; glycerophospholipid metabolism. Its function is as follows. Catalyzes the reduction of the glycolytic intermediate dihydroxyacetone phosphate (DHAP) to sn-glycerol 3-phosphate (G3P), the key precursor for phospholipid synthesis. The sequence is that of Glycerol-3-phosphate dehydrogenase [NAD(P)+] from Haemophilus ducreyi (strain 35000HP / ATCC 700724).